Reading from the N-terminus, the 507-residue chain is MEKWSLMTITVLLALTVRWTVSLGSYSGAGKPPMYGDYEAQRHWQEVTYNLPIRQWYFNTSDNNLLYWGLDYPPLTAYHSFLCAYVAKLINPDWIALHTSRGYESQSHKLFMRTTVFVADLLIYIPAVILYCCSLKETSTKKKVSSALCILLYPGLILIDHGHFQYNSVSLGFALWGVLCLSYDWDLLGSAAFCLALNYKQMELYHSLPFFCYLLGKCFKKGLKGKGLLLLIKLAGTVVASFAVCWLPFCTDVEQIMQVLRRLFPIDRGLFEDKVANIWCSLSVLIKIKNVVSPQTQLKLSFAVTFLSLLPTCIKLTVQPSLRGFKLTLVSCALSFFLFSFQVHEKSILLVSVPVCLIINEVPFMATWFLLVSTFSMLPLLLKDGLLLPYAVTTLAFLSACVASFAIFEKTSAKDLQLKPFSQSLRGYVSWFKLFPKIVRSLFLLSVTLMGVLSVMSAAVHPPQRFPDLFPVSVSSISCLHFLFFLVYFNVIILWDSKNSRNQKKVS.

At 1-3 the chain is on the cytoplasmic side; that stretch reads MEK. A helical membrane pass occupies residues 4–24; sequence WSLMTITVLLALTVRWTVSLG. At 25 to 114 the chain is on the lumenal side; the sequence is SYSGAGKPPM…SQSHKLFMRT (90 aa). Residue Asn59 is glycosylated (N-linked (GlcNAc...) asparagine). Residues 115 to 135 traverse the membrane as a helical segment; that stretch reads TVFVADLLIYIPAVILYCCSL. Over 136–143 the chain is Cytoplasmic; it reads KETSTKKK. A helical membrane pass occupies residues 144–164; it reads VSSALCILLYPGLILIDHGHF. Over 165 to 168 the chain is Lumenal; it reads QYNS. Residues 169-189 form a helical membrane-spanning segment; sequence VSLGFALWGVLCLSYDWDLLG. Over 190–226 the chain is Cytoplasmic; the sequence is SAAFCLALNYKQMELYHSLPFFCYLLGKCFKKGLKGK. Residues 227–247 traverse the membrane as a helical segment; that stretch reads GLLLLIKLAGTVVASFAVCWL. At 248 to 297 the chain is on the lumenal side; the sequence is PFCTDVEQIMQVLRRLFPIDRGLFEDKVANIWCSLSVLIKIKNVVSPQTQ. Residues 298-318 traverse the membrane as a helical segment; that stretch reads LKLSFAVTFLSLLPTCIKLTV. At 319–338 the chain is on the cytoplasmic side; it reads QPSLRGFKLTLVSCALSFFL. Residues 339 to 359 traverse the membrane as a helical segment; it reads FSFQVHEKSILLVSVPVCLII. Over 360 to 361 the chain is Lumenal; sequence NE. A helical membrane pass occupies residues 362-382; sequence VPFMATWFLLVSTFSMLPLLL. Topologically, residues 383–387 are cytoplasmic; the sequence is KDGLL. Residues 388-408 form a helical membrane-spanning segment; the sequence is LPYAVTTLAFLSACVASFAIF. Residues 409 to 441 are Lumenal-facing; it reads EKTSAKDLQLKPFSQSLRGYVSWFKLFPKIVRS. A helical transmembrane segment spans residues 442-462; sequence LFLLSVTLMGVLSVMSAAVHP. Topologically, residues 463 to 473 are cytoplasmic; that stretch reads PQRFPDLFPVS. Residues 474-494 form a helical membrane-spanning segment; it reads VSSISCLHFLFFLVYFNVIIL. The Lumenal portion of the chain corresponds to 495 to 507; the sequence is WDSKNSRNQKKVS.

The protein belongs to the ALG6/ALG8 glucosyltransferase family.

The protein localises to the endoplasmic reticulum membrane. It catalyses the reaction an alpha-D-Man-(1-&gt;2)-alpha-D-Man-(1-&gt;2)-alpha-D-Man-(1-&gt;3)-[alpha-D-Man-(1-&gt;2)-alpha-D-Man-(1-&gt;3)-[alpha-D-Man-(1-&gt;2)-alpha-D-Man-(1-&gt;6)]-alpha-D-Man-(1-&gt;6)]-beta-D-Man-(1-&gt;4)-beta-D-GlcNAc-(1-&gt;4)-alpha-D-GlcNAc-diphospho-di-trans,poly-cis-dolichol + a di-trans,poly-cis-dolichyl beta-D-glucosyl phosphate = an alpha-D-Glc-(1-&gt;3)-alpha-D-Man-(1-&gt;2)-alpha-D-Man-(1-&gt;2)-alpha-D-Man-(1-&gt;3)-[alpha-D-Man-(1-&gt;2)-alpha-D-Man-(1-&gt;3)-[alpha-D-Man-(1-&gt;2)-alpha-D-Man-(1-&gt;6)]-alpha-D-Man-(1-&gt;6)]-beta-D-Man-(1-&gt;4)-beta-D-GlcNAc-(1-&gt;4)-alpha-D-GlcNAc-diphospho-di-trans,poly-cis-dolichol + a di-trans,poly-cis-dolichyl phosphate + H(+). The protein operates within protein modification; protein glycosylation. In terms of biological role, dolichyl pyrophosphate Man9GlcNAc2 alpha-1,3-glucosyltransferase that operates in the biosynthetic pathway of dolichol-linked oligosaccharides, the glycan precursors employed in protein asparagine (N)-glycosylation. The assembly of dolichol-linked oligosaccharides begins on the cytosolic side of the endoplasmic reticulum membrane and finishes in its lumen. The sequential addition of sugars to dolichol pyrophosphate produces dolichol-linked oligosaccharides containing fourteen sugars, including two GlcNAcs, nine mannoses and three glucoses. Once assembled, the oligosaccharide is transferred from the lipid to nascent proteins by oligosaccharyltransferases. In the lumen of the endoplasmic reticulum, adds the first glucose residue from dolichyl phosphate glucose (Dol-P-Glc) onto the lipid-linked oligosaccharide intermediate Man(9)GlcNAc(2)-PP-Dol to produce Glc(1)Man(9)GlcNAc(2)-PP-Dol. Glc(1)Man(9)GlcNAc(2)-PP-Dol is a substrate for ALG8, the following enzyme in the biosynthetic pathway. The polypeptide is Dolichyl pyrophosphate Man9GlcNAc2 alpha-1,3-glucosyltransferase (Gallus gallus (Chicken)).